A 274-amino-acid chain; its full sequence is 3-methyl-2-oxobutanoate hydroxymethyltransferase (274 aa).

Mg(2+) is bound by residues aspartate 54 and aspartate 93. 3-methyl-2-oxobutanoate-binding positions include 54–55 (DS), aspartate 93, and lysine 121. Position 123 (glutamate 123) interacts with Mg(2+). Residue glutamate 190 is the Proton acceptor of the active site.

This sequence belongs to the PanB family. Homodecamer; pentamer of dimers. Mg(2+) is required as a cofactor.

The protein localises to the cytoplasm. The catalysed reaction is 3-methyl-2-oxobutanoate + (6R)-5,10-methylene-5,6,7,8-tetrahydrofolate + H2O = 2-dehydropantoate + (6S)-5,6,7,8-tetrahydrofolate. It participates in cofactor biosynthesis; (R)-pantothenate biosynthesis; (R)-pantoate from 3-methyl-2-oxobutanoate: step 1/2. In terms of biological role, catalyzes the reversible reaction in which hydroxymethyl group from 5,10-methylenetetrahydrofolate is transferred onto alpha-ketoisovalerate to form ketopantoate. The sequence is that of 3-methyl-2-oxobutanoate hydroxymethyltransferase from Ralstonia nicotianae (strain ATCC BAA-1114 / GMI1000) (Ralstonia solanacearum).